Reading from the N-terminus, the 122-residue chain is Ribonuclease P protein component (122 aa).

This sequence belongs to the RnpA family. As to quaternary structure, consists of a catalytic RNA component (M1 or rnpB) and a protein subunit.

It catalyses the reaction Endonucleolytic cleavage of RNA, removing 5'-extranucleotides from tRNA precursor.. In terms of biological role, RNaseP catalyzes the removal of the 5'-leader sequence from pre-tRNA to produce the mature 5'-terminus. It can also cleave other RNA substrates such as 4.5S RNA. The protein component plays an auxiliary but essential role in vivo by binding to the 5'-leader sequence and broadening the substrate specificity of the ribozyme. The chain is Ribonuclease P protein component from Synechococcus elongatus (strain ATCC 33912 / PCC 7942 / FACHB-805) (Anacystis nidulans R2).